A 245-amino-acid chain; its full sequence is 7-cyano-7-deazaguanine synthase (245 aa).

Position 19-29 (19-29) interacts with ATP; that stretch reads FSGGQDSATCL. Residues C207, C222, C225, and C228 each coordinate Zn(2+).

The protein belongs to the QueC family. It depends on Zn(2+) as a cofactor.

The enzyme catalyses 7-carboxy-7-deazaguanine + NH4(+) + ATP = 7-cyano-7-deazaguanine + ADP + phosphate + H2O + H(+). The protein operates within purine metabolism; 7-cyano-7-deazaguanine biosynthesis. Catalyzes the ATP-dependent conversion of 7-carboxy-7-deazaguanine (CDG) to 7-cyano-7-deazaguanine (preQ(0)). The polypeptide is 7-cyano-7-deazaguanine synthase (Gluconacetobacter diazotrophicus (strain ATCC 49037 / DSM 5601 / CCUG 37298 / CIP 103539 / LMG 7603 / PAl5)).